Reading from the N-terminus, the 1410-residue chain is Endoribonuclease Dicer homolog 2a (1410 aa).

Residues 1-15 (MGGPLTAAGGRGDGG) are compositionally biased toward gly residues. The disordered stretch occupies residues 1–30 (MGGPLTAAGGRGDGGAKAVEPLRPPPPPDP). The Helicase ATP-binding domain maps to 41–222 (ALERAVRGNT…HNYSKQISEI (182 aa)). 54–61 (LETGSGKT) contacts ATP. The short motif at 163 to 166 (DECH) is the DECH box element. The region spanning 388 to 561 (TLLQYRHMQD…DTYYRVESTR (174 aa)) is the Helicase C-terminal domain. The 87-residue stretch at 569–655 (SVPLIHFFCS…LPELDVPCDE (87 aa)) folds into the Dicer dsRNA-binding fold domain. One can recognise a PAZ domain in the interval 827-942 (KDIDLLQTKD…LPPELCRIIM (116 aa)). RNase III domains lie at 969–1124 (SVKL…STAG) and 1161–1308 (VRSL…LDSK). The Mg(2+) site is built by Glu1200, Asp1294, and Glu1297. One can recognise a DRBM domain in the interval 1334-1400 (DPVKGLQEFC…SKAVLKDLIA (67 aa)).

This sequence belongs to the helicase family. Dicer subfamily. May interact with ARGONAUTE1 or PINHEAD through their common PAZ domains. It depends on Mg(2+) as a cofactor. Requires Mn(2+) as cofactor.

The protein localises to the nucleus. Its function is as follows. Probably involved in the RNA silencing pathway. May cleave double-stranded RNA to produce short 21-24 nucleotides (nt) RNAs which target the selective destruction of complementary RNAs. The protein is Endoribonuclease Dicer homolog 2a (DCL2A) of Oryza sativa subsp. japonica (Rice).